A 190-amino-acid polypeptide reads, in one-letter code: Surfactant protein C (190 aa).

A propeptide spanning residues 1–24 (MDVGSKEVLMESPPDYTAVPGGRL) is cleaved from the precursor. S-palmitoyl cysteine attachment occurs at residues C28 and C29. The propeptide occupies 59-190 (HMSQKHTEMV…LCGEVPLYYT (132 aa)). Positions 94 to 190 (FSIGSTGTVV…LCGEVPLYYT (97 aa)) constitute a BRICHOS domain. An intrachain disulfide couples C121 to C182.

The protein localises to the secreted. The protein resides in the extracellular space. Its subcellular location is the surface film. Functionally, pulmonary surfactant associated proteins promote alveolar stability by lowering the surface tension at the air-liquid interface in the peripheral air spaces. The sequence is that of Surfactant protein C (SFTPC) from Bos taurus (Bovine).